The chain runs to 433 residues: Glutamate--tRNA ligase (433 aa).

Positions 10-20 (PSPTGYLHIGG) match the 'HIGH' region motif. Residues 211–215 (KMSKR) carry the 'KMSKS' region motif. ATP is bound at residue K214.

It belongs to the class-I aminoacyl-tRNA synthetase family. Glutamate--tRNA ligase type 1 subfamily. In terms of assembly, monomer.

It localises to the cytoplasm. The catalysed reaction is tRNA(Glu) + L-glutamate + ATP = L-glutamyl-tRNA(Glu) + AMP + diphosphate. Its function is as follows. Catalyzes the attachment of glutamate to tRNA(Glu) in a two-step reaction: glutamate is first activated by ATP to form Glu-AMP and then transferred to the acceptor end of tRNA(Glu). The protein is Glutamate--tRNA ligase of Akkermansia muciniphila (strain ATCC BAA-835 / DSM 22959 / JCM 33894 / BCRC 81048 / CCUG 64013 / CIP 107961 / Muc).